The sequence spans 149 residues: Transcriptional repressor NrdR (149 aa).

A zinc finger lies at 3–34 (CPFCAAVDTKVIDSRLVGDGSQVRRRRQCLEC). An ATP-cone domain is found at 49 to 139 (PRVIKSDDIR…VYRSFEDIRE (91 aa)).

It belongs to the NrdR family. Zn(2+) is required as a cofactor.

Negatively regulates transcription of bacterial ribonucleotide reductase nrd genes and operons by binding to NrdR-boxes. The protein is Transcriptional repressor NrdR of Photorhabdus laumondii subsp. laumondii (strain DSM 15139 / CIP 105565 / TT01) (Photorhabdus luminescens subsp. laumondii).